The following is a 157-amino-acid chain: Nucleoside deoxyribosyltransferase (157 aa).

Residue Glu-98 is the Nucleophile of the active site.

The protein belongs to the nucleoside deoxyribosyltransferase family. As to quaternary structure, homohexamer.

It carries out the reaction 2-deoxy-D-ribosyl-base(1) + base(2) = 2-deoxy-D-ribosyl-base(2) + base(1).. The protein operates within nucleotide metabolism; nucleotide salvage pathway. Catalyzes the cleavage of the glycosidic bond of 2'-deoxyribonucleosides and the transfer of the deoxyribosyl moiety to an acceptor purine or pyrimidine base. In Lactobacillus leichmannii, this protein is Nucleoside deoxyribosyltransferase (ntd).